Reading from the N-terminus, the 143-residue chain is Transcription antitermination protein NusB (143 aa).

This sequence belongs to the NusB family.

Functionally, involved in transcription antitermination. Required for transcription of ribosomal RNA (rRNA) genes. Binds specifically to the boxA antiterminator sequence of the ribosomal RNA (rrn) operons. In Clostridium botulinum (strain ATCC 19397 / Type A), this protein is Transcription antitermination protein NusB.